The following is a 238-amino-acid chain: Ribonuclease PH (238 aa).

Phosphate is bound by residues arginine 86 and 124–126 (GTR).

Belongs to the RNase PH family. As to quaternary structure, homohexameric ring arranged as a trimer of dimers.

It carries out the reaction tRNA(n+1) + phosphate = tRNA(n) + a ribonucleoside 5'-diphosphate. Phosphorolytic 3'-5' exoribonuclease that plays an important role in tRNA 3'-end maturation. Removes nucleotide residues following the 3'-CCA terminus of tRNAs; can also add nucleotides to the ends of RNA molecules by using nucleoside diphosphates as substrates, but this may not be physiologically important. Probably plays a role in initiation of 16S rRNA degradation (leading to ribosome degradation) during starvation. This Rhizorhabdus wittichii (strain DSM 6014 / CCUG 31198 / JCM 15750 / NBRC 105917 / EY 4224 / RW1) (Sphingomonas wittichii) protein is Ribonuclease PH.